A 160-amino-acid chain; its full sequence is Nucleotide-binding protein Smal_3487 (160 aa).

It belongs to the YajQ family.

In terms of biological role, nucleotide-binding protein. The chain is Nucleotide-binding protein Smal_3487 from Stenotrophomonas maltophilia (strain R551-3).